The primary structure comprises 418 residues: Putative ion-transport protein YfeO (418 aa).

12 helical membrane-spanning segments follow: residues 10 to 30, 54 to 74, 99 to 119, 120 to 140, 149 to 169, 186 to 206, 223 to 243, 258 to 278, 300 to 320, 322 to 342, 343 to 363, and 371 to 391; these read LLLS…LIVV, DSPI…GLVI, ALPG…SLGP, EHPI…RLLP, ILAS…AALI, LFAP…FFHP, ILSG…AVWC, VLVL…GGPV, DYFL…ASGF, GGRI…LHEH, VPAV…VLVV, and LFMA…CIVM.

The protein belongs to the chloride channel (TC 2.A.49) family.

The protein resides in the cell membrane. The sequence is that of Putative ion-transport protein YfeO from Shigella sonnei (strain Ss046).